Here is a 331-residue protein sequence, read N- to C-terminus: UPF0324 membrane protein SAS0317 (331 aa).

The next 11 membrane-spanning stretches (helical) occupy residues 9–26 (FMIG…SFLA), 31–48 (ILDK…AILY), 69–88 (LLRF…DIIG), 93–115 (LLAI…NKLL), 122–144 (ALLL…APIF), 154–176 (SIGI…YAIF), 183–202 (YGAW…LAGG), 217–234 (LGRV…ILIM), 247–269 (ISIP…VTIP), 273–295 (LNIL…GLNV), and 308–330 (LMTI…HWLY).

It belongs to the UPF0324 family.

It localises to the cell membrane. The sequence is that of UPF0324 membrane protein SAS0317 from Staphylococcus aureus (strain MSSA476).